Here is a 104-residue protein sequence, read N- to C-terminus: MTTQFDNVSVVKKANIYFDGKCVSHTVLFADGTKKTIGIIFPSTLKFNTGAAEIMELNAGKCRIRLAGATEWNTYEGGQQFEVPANSSFDIETVDTLDYVCHFI.

It belongs to the nucleoside phosphorylase PpnP family.

The enzyme catalyses a purine D-ribonucleoside + phosphate = a purine nucleobase + alpha-D-ribose 1-phosphate. The catalysed reaction is adenosine + phosphate = alpha-D-ribose 1-phosphate + adenine. It carries out the reaction cytidine + phosphate = cytosine + alpha-D-ribose 1-phosphate. It catalyses the reaction guanosine + phosphate = alpha-D-ribose 1-phosphate + guanine. The enzyme catalyses inosine + phosphate = alpha-D-ribose 1-phosphate + hypoxanthine. The catalysed reaction is thymidine + phosphate = 2-deoxy-alpha-D-ribose 1-phosphate + thymine. It carries out the reaction uridine + phosphate = alpha-D-ribose 1-phosphate + uracil. It catalyses the reaction xanthosine + phosphate = alpha-D-ribose 1-phosphate + xanthine. Functionally, catalyzes the phosphorolysis of diverse nucleosides, yielding D-ribose 1-phosphate and the respective free bases. Can use uridine, adenosine, guanosine, cytidine, thymidine, inosine and xanthosine as substrates. Also catalyzes the reverse reactions. The polypeptide is Pyrimidine/purine nucleoside phosphorylase (Herminiimonas arsenicoxydans).